A 182-amino-acid chain; its full sequence is Isopentenyl-diphosphate Delta-isomerase (182 aa).

His-25 and His-32 together coordinate Mn(2+). The Nudix hydrolase domain occupies 30 to 164 (LLHLAFSSWL…PWAFSPWMVM (135 aa)). Cys-67 is an active-site residue. His-69 lines the Mn(2+) pocket. Glu-87 serves as a coordination point for Mg(2+). Residues Glu-114 and Glu-116 each contribute to the Mn(2+) site. The active site involves Glu-116.

Belongs to the IPP isomerase type 1 family. In terms of assembly, homodimer. Mg(2+) serves as cofactor. The cofactor is Mn(2+).

It is found in the cytoplasm. It carries out the reaction isopentenyl diphosphate = dimethylallyl diphosphate. It participates in isoprenoid biosynthesis; dimethylallyl diphosphate biosynthesis; dimethylallyl diphosphate from isopentenyl diphosphate: step 1/1. Catalyzes the 1,3-allylic rearrangement of the homoallylic substrate isopentenyl (IPP) to its highly electrophilic allylic isomer, dimethylallyl diphosphate (DMAPP). This Escherichia coli (strain SMS-3-5 / SECEC) protein is Isopentenyl-diphosphate Delta-isomerase.